The chain runs to 240 residues: Bactofilin BacP (240 aa).

Residues 116 to 240 (DVEPGRLPAE…KKVVVKKKTR (125 aa)) are interacts with PadC. Positions 117–240 (VEPGRLPAER…KKVVVKKKTR (124 aa)) are disordered. Over residues 126-150 (RPAVVRPTAVTRPTATPARPTIPAA) the composition is skewed to low complexity. The span at 151–173 (RPMPPPPPSRPTPPPPPARPSAP) shows a compositional bias: pro residues. Positions 229–240 (AKKKVVVKKKTR) are enriched in basic residues.

It belongs to the bactofilin family. Interacts with BacN and probably also BacO, the 3 proteins colocalize as an extended structure. Interacts with PadC.

The protein localises to the cytoplasm. The protein resides in the cytoskeleton. Functionally, a non-essential component of the chromosome segregation machinery. Positions the ParA-ParB-parS chromosome segregation machinery within the cell; BacP seems to be the most important bactofilin in this process. Forms a heteropolymeric, subpolar scaffold in the cell; BacP probably forms the core, BacO contributes to position and integrity while BacN does not seem to contribute to assembly. The sequence is that of Bactofilin BacP from Myxococcus xanthus (strain DK1622).